Reading from the N-terminus, the 93-residue chain is Small ribosomal subunit protein uS19 (93 aa).

Belongs to the universal ribosomal protein uS19 family.

In terms of biological role, protein S19 forms a complex with S13 that binds strongly to the 16S ribosomal RNA. The polypeptide is Small ribosomal subunit protein uS19 (Helicobacter acinonychis (strain Sheeba)).